Here is a 412-residue protein sequence, read N- to C-terminus: Thyroxine-binding globulin (412 aa).

The N-terminal stretch at M1–C16 is a signal peptide. Residues N35, N98, N164, and N252 are each glycosylated (N-linked (GlcNAc...) asparagine). Thyroxine-binding residues include N292 and K395.

This sequence belongs to the serpin family. As to expression, expressed by the liver and secreted in plasma.

It is found in the secreted. Its function is as follows. Major thyroid hormone transport protein in serum. In Ovis aries (Sheep), this protein is Thyroxine-binding globulin (SERPINA7).